We begin with the raw amino-acid sequence, 204 residues long: Ras-related protein RabL (204 aa).

14 to 21 (GDSNVGKT) contributes to the GTP binding site. An Effector region motif is present at residues 36–44 (RPPSIGPDY). GTP contacts are provided by residues 62–66 (DTCGQ) and 120–123 (TKSD). S-geranylgeranyl cysteine attachment occurs at residues Cys203 and Cys204.

It belongs to the small GTPase superfamily. Rab family.

The protein resides in the cell membrane. This chain is Ras-related protein RabL (rabL), found in Dictyostelium discoideum (Social amoeba).